A 141-amino-acid polypeptide reads, in one-letter code: Large ribosomal subunit protein uL11 (141 aa).

It belongs to the universal ribosomal protein uL11 family. As to quaternary structure, part of the ribosomal stalk of the 50S ribosomal subunit. Interacts with L10 and the large rRNA to form the base of the stalk. L10 forms an elongated spine to which L12 dimers bind in a sequential fashion forming a multimeric L10(L12)X complex. One or more lysine residues are methylated.

Its function is as follows. Forms part of the ribosomal stalk which helps the ribosome interact with GTP-bound translation factors. The chain is Large ribosomal subunit protein uL11 from Chloroherpeton thalassium (strain ATCC 35110 / GB-78).